Here is a 189-residue protein sequence, read N- to C-terminus: Thymidine kinase (189 aa).

Residues 9-16 (GTMNSGKT) and 85-88 (DESQ) each bind ATP. E86 serves as the catalytic Proton acceptor. Residues C143, C146, C180, and H183 each contribute to the Zn(2+) site.

The protein belongs to the thymidine kinase family. Homotetramer.

The protein localises to the cytoplasm. The enzyme catalyses thymidine + ATP = dTMP + ADP + H(+). This is Thymidine kinase from Streptococcus pyogenes serotype M3 (strain ATCC BAA-595 / MGAS315).